A 138-amino-acid polypeptide reads, in one-letter code: ATP synthase epsilon chain (138 aa).

Belongs to the ATPase epsilon chain family. In terms of assembly, F-type ATPases have 2 components, CF(1) - the catalytic core - and CF(0) - the membrane proton channel. CF(1) has five subunits: alpha(3), beta(3), gamma(1), delta(1), epsilon(1). CF(0) has three main subunits: a, b and c.

It localises to the cell membrane. In terms of biological role, produces ATP from ADP in the presence of a proton gradient across the membrane. In Streptococcus gordonii (strain Challis / ATCC 35105 / BCRC 15272 / CH1 / DL1 / V288), this protein is ATP synthase epsilon chain.